The following is a 1395-amino-acid chain: G-protein coupled receptor-associated sorting protein 1 (1395 aa).

3 disordered regions span residues 1-25, 45-83, and 269-288; these read MTGA…VVGG, QIMP…AKAI, and TNTW…FRSK. Basic and acidic residues predominate over residues 269–281; the sequence is TNTWSGPREDPNS. Position 297 is a phosphoserine (S297). Positions 446 to 469 are disordered; it reads SMGTGASSKSRPRTDGERIGDSLF. Positions 457-469 are enriched in basic and acidic residues; it reads PRTDGERIGDSLF. A phosphoserine mark is found at S631 and S899. The interval 899 to 1395 is OPRD1-binding; that stretch reads SETEEETIFG…QNDPEGDQEN (497 aa).

The protein belongs to the GPRASP family. Interacts with cytoplasmic tails of a variety of G-protein coupled receptors such as D2 dopamine receptor/DRD2, delta opioid receptor/OPRD1, beta-2 adrenergic receptor/ADRB2 and D4 dopamine receptor/DRD4. Interacts with PER1. Interacts with BECN2; the interaction is direct. As to expression, expressed in the brain, with lower expression in medulla, spinal cord and substantia nigra.

The protein localises to the cytoplasm. Modulates lysosomal sorting and functional down-regulation of a variety of G-protein coupled receptors. Targets receptors for degradation in lysosomes via its interaction with BECN2. The chain is G-protein coupled receptor-associated sorting protein 1 (GPRASP1) from Homo sapiens (Human).